The following is a 250-amino-acid chain: Flavin-dependent thymidylate synthase (250 aa).

The region spanning 7-233 (LRVQLIAKTD…PAVFADFEVT (227 aa)) is the ThyX domain. Residues S71, 95-97 (RHR), and Q103 contribute to the FAD site. DUMP-binding positions include 92-95 (ELIR), 103-107 (QLSQR), and R172. The ThyX motif signature appears at 95-105 (RHRHFSYSQLS). FAD-binding positions include 188-190 (NYR) and H194. Position 199 (R199) interacts with dUMP. Residue R199 is the Involved in ionization of N3 of dUMP, leading to its activation of the active site.

The protein belongs to the thymidylate synthase ThyX family. As to quaternary structure, homotetramer. It depends on FAD as a cofactor.

It carries out the reaction dUMP + (6R)-5,10-methylene-5,6,7,8-tetrahydrofolate + NADPH + H(+) = dTMP + (6S)-5,6,7,8-tetrahydrofolate + NADP(+). Its pathway is pyrimidine metabolism; dTTP biosynthesis. Catalyzes the reductive methylation of 2'-deoxyuridine-5'-monophosphate (dUMP) to 2'-deoxythymidine-5'-monophosphate (dTMP) while utilizing 5,10-methylenetetrahydrofolate (mTHF) as the methyl donor, and NADPH and FADH(2) as the reductant. This chain is Flavin-dependent thymidylate synthase, found in Mycobacterium bovis (strain ATCC BAA-935 / AF2122/97).